A 127-amino-acid chain; its full sequence is Phosphoribosyl-AMP cyclohydrolase (127 aa).

D83 is a binding site for Mg(2+). Residue C84 participates in Zn(2+) binding. The Mg(2+) site is built by D85 and D87. Zn(2+)-binding residues include C100 and C107.

This sequence belongs to the PRA-CH family. As to quaternary structure, homodimer. Requires Mg(2+) as cofactor. It depends on Zn(2+) as a cofactor.

It localises to the cytoplasm. It catalyses the reaction 1-(5-phospho-beta-D-ribosyl)-5'-AMP + H2O = 1-(5-phospho-beta-D-ribosyl)-5-[(5-phospho-beta-D-ribosylamino)methylideneamino]imidazole-4-carboxamide. Its pathway is amino-acid biosynthesis; L-histidine biosynthesis; L-histidine from 5-phospho-alpha-D-ribose 1-diphosphate: step 3/9. Catalyzes the hydrolysis of the adenine ring of phosphoribosyl-AMP. This is Phosphoribosyl-AMP cyclohydrolase from Methanocaldococcus jannaschii (strain ATCC 43067 / DSM 2661 / JAL-1 / JCM 10045 / NBRC 100440) (Methanococcus jannaschii).